The primary structure comprises 848 residues: Protein NETWORKED 2C (848 aa).

The NAB domain maps to 10–90; the sequence is YSWWWASHVR…ERYDHISKEL (81 aa). The interval 108–141 is disordered; the sequence is FAMNEDDDDDAPVSPRHHKNKTSNKNVPKVPDLP. Coiled-coil stretches lie at residues 172 to 204, 241 to 278, 305 to 454, and 752 to 797; these read LSKT…SYEN, EAQI…SRKQ, SEKE…KATN, and AKFE…SEEF.

Belongs to the NET family.

In terms of biological role, plant-specific actin binding protein. May be part of a membrane-cytoskeletal adapter complex. The protein is Protein NETWORKED 2C of Arabidopsis thaliana (Mouse-ear cress).